A 217-amino-acid polypeptide reads, in one-letter code: Adenylate kinase (217 aa).

10-15 (GAGKGT) lines the ATP pocket. Residues 30 to 59 (STGDMFRAAMKNETELGLKAKSFIDAGDLV) form an NMP region. Residues threonine 31, arginine 36, 57-59 (DLV), 85-88 (GFPR), and glutamine 92 each bind AMP. The LID stretch occupies residues 126-163 (GRRVSPTTGKTYHIVYNPPKVEGKCDIDGSDLIQRDDD). ATP contacts are provided by residues arginine 127 and 136–137 (TY). AMP contacts are provided by arginine 160 and arginine 171. Glutamine 199 is a binding site for ATP.

Belongs to the adenylate kinase family. As to quaternary structure, monomer.

It is found in the cytoplasm. It catalyses the reaction AMP + ATP = 2 ADP. It functions in the pathway purine metabolism; AMP biosynthesis via salvage pathway; AMP from ADP: step 1/1. In terms of biological role, catalyzes the reversible transfer of the terminal phosphate group between ATP and AMP. Plays an important role in cellular energy homeostasis and in adenine nucleotide metabolism. The chain is Adenylate kinase from Shouchella clausii (strain KSM-K16) (Alkalihalobacillus clausii).